The sequence spans 279 residues: Probable endonuclease 4 (279 aa).

Zn(2+)-binding residues include His69, His109, Glu145, Asp179, His182, His216, Asp229, His231, and Glu261.

It belongs to the AP endonuclease 2 family. The cofactor is Zn(2+).

It carries out the reaction Endonucleolytic cleavage to 5'-phosphooligonucleotide end-products.. In terms of biological role, endonuclease IV plays a role in DNA repair. It cleaves phosphodiester bonds at apurinic or apyrimidinic (AP) sites, generating a 3'-hydroxyl group and a 5'-terminal sugar phosphate. The polypeptide is Probable endonuclease 4 (Desulforapulum autotrophicum (strain ATCC 43914 / DSM 3382 / VKM B-1955 / HRM2) (Desulfobacterium autotrophicum)).